A 318-amino-acid polypeptide reads, in one-letter code: Homoserine kinase (318 aa).

97–107 is a binding site for ATP; that stretch reads PIGSGLGSSAC.

It belongs to the GHMP kinase family. Homoserine kinase subfamily.

It is found in the cytoplasm. The catalysed reaction is L-homoserine + ATP = O-phospho-L-homoserine + ADP + H(+). It participates in amino-acid biosynthesis; L-threonine biosynthesis; L-threonine from L-aspartate: step 4/5. In terms of biological role, catalyzes the ATP-dependent phosphorylation of L-homoserine to L-homoserine phosphate. This Vibrio cholerae serotype O1 (strain ATCC 39541 / Classical Ogawa 395 / O395) protein is Homoserine kinase.